We begin with the raw amino-acid sequence, 265 residues long: Glutamate racemase (265 aa).

Substrate-binding positions include 9-10 and 41-42; these read DS and YG. Residue Cys-72 is the Proton donor/acceptor of the active site. Residue 73–74 coordinates substrate; it reads NT. Cys-183 serves as the catalytic Proton donor/acceptor. Residue 184–185 coordinates substrate; the sequence is TH.

Belongs to the aspartate/glutamate racemases family.

The enzyme catalyses L-glutamate = D-glutamate. The protein operates within cell wall biogenesis; peptidoglycan biosynthesis. Functionally, provides the (R)-glutamate required for cell wall biosynthesis. This is Glutamate racemase from Lysinibacillus sphaericus (Bacillus sphaericus).